Consider the following 545-residue polypeptide: Sphingomyelin phosphodiesterase 5 (545 aa).

A mitochondrion-targeting transit peptide spans 1–35 (MSLRESPFPNGFLEGLHAVGWGLIFPCFWFLDRLI). Topologically, residues 36-64 (AVCISTTLERMWRLEQECYLHPLKVVFGS) are mitochondrial matrix. The chain crosses the membrane as a helical; Signal-anchor for type II membrane protein span at residues 65–85 (ILFFILFVISTPFALLGFILW). At 86–545 (APLQAIRRPF…LSVSLDSEQN (460 aa)) the chain is on the mitochondrial intermembrane side. Glutamate 258 lines the Mg(2+) pocket. The active-site Proton acceptor is histidine 529.

This sequence belongs to the neutral sphingomyelinase family. Mg(2+) is required as a cofactor. The cofactor is Mn(2+).

Its subcellular location is the mitochondrion inner membrane. The protein resides in the endoplasmic reticulum membrane. It catalyses the reaction a sphingomyelin + H2O = phosphocholine + an N-acylsphing-4-enine + H(+). The enzyme catalyses N-(hexadecanoyl)-sphing-4-enine-1-phosphocholine + H2O = N-hexadecanoylsphing-4-enine + phosphocholine + H(+). The protein operates within lipid metabolism; sphingolipid metabolism. Activated by the phospholipids cardiolipin, phosphatidylserine, and phosphatidylethanolamine. Strongest activation with cardiolipin. Its function is as follows. Catalyzes the hydrolysis of membrane sphingomyelin to form phosphorylcholine and ceramide. In Danio rerio (Zebrafish), this protein is Sphingomyelin phosphodiesterase 5.